Consider the following 201-residue polypeptide: 3-isopropylmalate dehydratase small subunit (201 aa).

The protein belongs to the LeuD family. LeuD type 1 subfamily. Heterodimer of LeuC and LeuD.

The catalysed reaction is (2R,3S)-3-isopropylmalate = (2S)-2-isopropylmalate. It functions in the pathway amino-acid biosynthesis; L-leucine biosynthesis; L-leucine from 3-methyl-2-oxobutanoate: step 2/4. In terms of biological role, catalyzes the isomerization between 2-isopropylmalate and 3-isopropylmalate, via the formation of 2-isopropylmaleate. This chain is 3-isopropylmalate dehydratase small subunit, found in Glaesserella parasuis serovar 5 (strain SH0165) (Haemophilus parasuis).